Consider the following 123-residue polypeptide: uncharacterized protein (123 aa).

Residues 36–76 are a coiled coil; it reads VDRQENKKEFLSAEEAREKFKELINQVRSWKEQMSTLSKYA.

This is an uncharacterized protein from Aquifex aeolicus (strain VF5).